Consider the following 192-residue polypeptide: MIEPSIIPVLVENTEEKTFKFQPGQVSQWLTGQGLQHQILEPDLLGVELIGVEPSELQKIAEALKSNGFDYLQCQGGYDEGPGGRLVSFYHLIKLGTIADHYLTPNTLPPNSILKEVRLKVFLLRDGNLSVPSLYSIFRGSDWQERETFDMFGISYEGHPHPKRLLMPEDWKGYPLRKDYIQPDFYEMQVAY.

Belongs to the complex I 30 kDa subunit family. NDH is composed of at least 16 different subunits, 5 of which are encoded in the nucleus.

It is found in the plastid. The protein localises to the organellar chromatophore thylakoid membrane. The enzyme catalyses a quinone + NADH + H(+) = a quinol + NAD(+). In terms of biological role, NDH-1 shuttles electrons from NADH, via FMN and iron-sulfur (Fe-S) centers, to quinones in the respiratory chain. Couples the redox reaction to proton translocation (for every two electrons transferred, four hydrogen ions are translocated across the cytoplasmic membrane), and thus conserves the redox energy in a proton gradient. The chain is NAD(P)H-quinone oxidoreductase subunit J, organellar chromatophore from Paulinella chromatophora.